A 240-amino-acid polypeptide reads, in one-letter code: tRNA (guanine-N(1)-)-methyltransferase (240 aa).

S-adenosyl-L-methionine is bound by residues G111 and 130–135; that span reads IGDYVI.

It belongs to the RNA methyltransferase TrmD family. As to quaternary structure, homodimer.

It is found in the cytoplasm. It catalyses the reaction guanosine(37) in tRNA + S-adenosyl-L-methionine = N(1)-methylguanosine(37) in tRNA + S-adenosyl-L-homocysteine + H(+). In terms of biological role, specifically methylates guanosine-37 in various tRNAs. This chain is tRNA (guanine-N(1)-)-methyltransferase, found in Mycoplasma capricolum subsp. capricolum (strain California kid / ATCC 27343 / NCTC 10154).